Consider the following 153-residue polypeptide: Arginine repressor (153 aa).

It belongs to the ArgR family.

Its subcellular location is the cytoplasm. It participates in amino-acid biosynthesis; L-arginine biosynthesis [regulation]. Regulates arginine biosynthesis genes. In Acetivibrio thermocellus (strain ATCC 27405 / DSM 1237 / JCM 9322 / NBRC 103400 / NCIMB 10682 / NRRL B-4536 / VPI 7372) (Clostridium thermocellum), this protein is Arginine repressor.